Consider the following 113-residue polypeptide: MELEKNERINALFAFYQPLLTAKQNDYLQLYYADDYSLGEIATEFSVSRQAVYDNIKRTEKILEGYEQKLHLYAEFEARNQQADRIRDYVLSHYPTDQTLRDLIDGMENLEAK.

The protein belongs to the UPF0122 family.

In terms of biological role, might take part in the signal recognition particle (SRP) pathway. This is inferred from the conservation of its genetic proximity to ftsY/ffh. May be a regulatory protein. This chain is UPF0122 protein LAF_1235, found in Limosilactobacillus fermentum (strain NBRC 3956 / LMG 18251) (Lactobacillus fermentum).